The sequence spans 197 residues: GTP cyclohydrolase-2 (197 aa).

GTP is bound at residue R49 to E53. The Zn(2+) site is built by C54, C65, and C67. Residues Q70, E92–R94, and T114 each bind GTP. The active-site Proton acceptor is the D126. R128 acts as the Nucleophile in catalysis. GTP-binding residues include T149 and K154.

It belongs to the GTP cyclohydrolase II family. In terms of assembly, homodimer. Requires Zn(2+) as cofactor.

The enzyme catalyses GTP + 4 H2O = 2,5-diamino-6-hydroxy-4-(5-phosphoribosylamino)-pyrimidine + formate + 2 phosphate + 3 H(+). It participates in cofactor biosynthesis; riboflavin biosynthesis; 5-amino-6-(D-ribitylamino)uracil from GTP: step 1/4. Catalyzes the conversion of GTP to 2,5-diamino-6-ribosylamino-4(3H)-pyrimidinone 5'-phosphate (DARP), formate and pyrophosphate. The chain is GTP cyclohydrolase-2 from Cronobacter sakazakii (strain ATCC BAA-894) (Enterobacter sakazakii).